The sequence spans 462 residues: Hydroxymethylglutaryl-CoA synthase (462 aa).

Glu92 (proton donor/acceptor) is an active-site residue. The active-site Acyl-thioester intermediate is Cys124. Residues Cys124, Thr167, Ser219, His257, Lys266, Asn327, and Ser360 each coordinate (3S)-3-hydroxy-3-methylglutaryl-CoA. The active-site Proton donor/acceptor is the His257. Lys408 participates in a covalent cross-link: Glycyl lysine isopeptide (Lys-Gly) (interchain with G-Cter in SUMO).

The protein belongs to the thiolase-like superfamily. HMG-CoA synthase family. In terms of processing, ubiquitinated.

It catalyses the reaction acetoacetyl-CoA + acetyl-CoA + H2O = (3S)-3-hydroxy-3-methylglutaryl-CoA + CoA + H(+). Its pathway is metabolic intermediate biosynthesis; (R)-mevalonate biosynthesis; (R)-mevalonate from acetyl-CoA: step 2/3. In terms of biological role, this enzyme condenses acetyl-CoA with acetoacetyl-CoA to form HMG-CoA, which is the substrate for HMG-CoA reductase. The polypeptide is Hydroxymethylglutaryl-CoA synthase (Caenorhabditis elegans).